Reading from the N-terminus, the 229-residue chain is Triosephosphate isomerase (229 aa).

9–11 contributes to the substrate binding site; it reads NLK. His93 acts as the Electrophile in catalysis. Glu141 (proton acceptor) is an active-site residue. Residues Ile146, Gly181, and 202–203 each bind substrate; that span reads AS.

It belongs to the triosephosphate isomerase family. Homotetramer; dimer of dimers.

Its subcellular location is the cytoplasm. It catalyses the reaction D-glyceraldehyde 3-phosphate = dihydroxyacetone phosphate. The protein operates within carbohydrate biosynthesis; gluconeogenesis. Its pathway is carbohydrate degradation; glycolysis; D-glyceraldehyde 3-phosphate from glycerone phosphate: step 1/1. Functionally, involved in the gluconeogenesis. Catalyzes stereospecifically the conversion of dihydroxyacetone phosphate (DHAP) to D-glyceraldehyde-3-phosphate (G3P). The protein is Triosephosphate isomerase of Pyrobaculum islandicum (strain DSM 4184 / JCM 9189 / GEO3).